We begin with the raw amino-acid sequence, 95 residues long: Putative regulatory protein Pmob_0099 (95 aa).

Belongs to the RemA family.

This is Putative regulatory protein Pmob_0099 from Petrotoga mobilis (strain DSM 10674 / SJ95).